The primary structure comprises 389 residues: Chalcone synthase 4-2 (389 aa).

Cys164 is an active-site residue.

It belongs to the thiolase-like superfamily. Chalcone/stilbene synthases family.

The catalysed reaction is (E)-4-coumaroyl-CoA + 3 malonyl-CoA + 3 H(+) = 2',4,4',6'-tetrahydroxychalcone + 3 CO2 + 4 CoA. Its pathway is secondary metabolite biosynthesis; flavonoid biosynthesis. In terms of biological role, the primary product of this enzyme is 4,2',4',6'-tetrahydroxychalcone (also termed naringenin-chalcone or chalcone) which can under specific conditions spontaneously isomerize into naringenin. The sequence is that of Chalcone synthase 4-2 (CHS4-2) from Medicago sativa (Alfalfa).